Here is a 465-residue protein sequence, read N- to C-terminus: Argininosuccinate lyase (465 aa).

Belongs to the lyase 1 family. Argininosuccinate lyase subfamily.

The protein localises to the cytoplasm. It catalyses the reaction 2-(N(omega)-L-arginino)succinate = fumarate + L-arginine. It functions in the pathway amino-acid biosynthesis; L-arginine biosynthesis; L-arginine from L-ornithine and carbamoyl phosphate: step 3/3. In Methanosphaera stadtmanae (strain ATCC 43021 / DSM 3091 / JCM 11832 / MCB-3), this protein is Argininosuccinate lyase.